Reading from the N-terminus, the 464-residue chain is Protein FAM90A22 (464 aa).

Disordered regions lie at residues 1–43, 70–389, and 415–437; these read MMAR…PRLK, PATL…HDGA, and HSPEKPGAFLAQSPHVSEKSEAP. Composition is skewed to basic and acidic residues over residues 74 to 89 and 97 to 114; these read GKKEGKENLKPWKPRA and NKDKGEKEERPRQQDPQR. Positions 182–197 are enriched in low complexity; that stretch reads SLSPLRKTSLSSSSSL.

This sequence belongs to the FAM90 family.

This Homo sapiens (Human) protein is Protein FAM90A22.